A 1468-amino-acid chain; its full sequence is DNA-directed RNA polymerase subunit beta (1468 aa).

It belongs to the RNA polymerase beta chain family. As to quaternary structure, the RNAP catalytic core consists of 2 alpha, 1 beta, 1 beta' and 1 omega subunit. When a sigma factor is associated with the core the holoenzyme is formed, which can initiate transcription.

The enzyme catalyses RNA(n) + a ribonucleoside 5'-triphosphate = RNA(n+1) + diphosphate. Its function is as follows. DNA-dependent RNA polymerase catalyzes the transcription of DNA into RNA using the four ribonucleoside triphosphates as substrates. The protein is DNA-directed RNA polymerase subunit beta of Aquifex aeolicus (strain VF5).